Reading from the N-terminus, the 426-residue chain is Selenate reductase subunit C (426 aa).

10 helical membrane passes run 5 to 25, 40 to 60, 78 to 98, 119 to 139, 187 to 207, 223 to 243, 261 to 281, 302 to 322, 330 to 350, and 385 to 405; these read LYFTVLSFIAIVGVISLYIRL, WGLWIVFYIYFIGLSAGSFLL, LALFTAFFSLMAGLLFVLIDL, WEIQFYLIYMLLIVAEIWFLM, ILGIAGIPTAVGVHGGTGSLF, IIFLVSALVSGAALMLFLYSF, LLTLFIGIDLLLMIAEFLIGL, FIFWIGQIGMVIILPILLITI, MGLAGLSVVLGIVCVRWILVI, and VGLIGIVILLFSITVQLVPVF.

This sequence belongs to the NrfD family. In terms of assembly, the complex is composed of three subunits: SrdA, SrdB and SrdC.

It is found in the cell membrane. The catalysed reaction is selenite + a quinone + H2O = selenate + a quinol. Its function is as follows. Component of the respiratory selenate reductase complex, which catalyzes the reduction of selenate to selenite. This subunit probably receives electrons directly from the membrane quinone pool and transfers the electrons to the iron-sulfur clusters of SrdB. May be the membrane anchor protein subunit of the complex. This chain is Selenate reductase subunit C, found in Mesobacillus selenatarsenatis (strain DSM 18680 / JCM 14380 / FERM P-15431 / SF-1).